A 323-amino-acid chain; its full sequence is Aldo-keto reductase family 1 member C18 (323 aa).

Residues 20-24 (GFGTY) and D50 each bind NADP(+). Residue Y55 is the Proton donor of the active site. H117 lines the substrate pocket. NADP(+) contacts are provided by residues 166–167 (SN), Q190, 216–221 (YGALGT), and 270–280 (KSFNEERIREN).

It belongs to the aldo/keto reductase family. As to quaternary structure, monomer. The N-terminus is blocked. In terms of tissue distribution, corpus luteum (large luteal cells).

The protein resides in the cytoplasm. The catalysed reaction is (17R,20S)-17,20-dihydroxypregn-4-en-3-one + NADP(+) = 17alpha-hydroxyprogesterone + NADPH + H(+). It catalyses the reaction (17R,20S)-17,20-dihydroxypregn-4-en-3-one + NAD(+) = 17alpha-hydroxyprogesterone + NADH + H(+). Catalyzes the conversion of progesterone into 20-alpha-dihydroprogesterone (20 alpha-OHP). This Rattus norvegicus (Rat) protein is Aldo-keto reductase family 1 member C18 (Akr1c18).